A 424-amino-acid polypeptide reads, in one-letter code: Cysteate synthase (424 aa).

Position 106 is an N6-(pyridoxal phosphate)lysine (Lys106). Pyridoxal 5'-phosphate-binding residues include Asn132 and Thr381.

The protein belongs to the threonine synthase family. Cysteate synthase subfamily. As to quaternary structure, homotrimer. Requires pyridoxal 5'-phosphate as cofactor.

It catalyses the reaction O-phospho-L-serine + sulfite + H(+) = L-cysteate + phosphate. The protein operates within cofactor biosynthesis; coenzyme M biosynthesis. Its function is as follows. Specifically catalyzes the beta-elimination of phosphate from L-phosphoserine and the beta-addition of sulfite to the dehydroalanine intermediate to produce L-cysteate. The chain is Cysteate synthase from Methanoregula boonei (strain DSM 21154 / JCM 14090 / 6A8).